A 207-amino-acid polypeptide reads, in one-letter code: Claudin-11 (207 aa).

A topological domain (cytoplasmic) is located at residue methionine 1. A helical membrane pass occupies residues valine 2–isoleucine 22. At valine 23–arginine 82 the chain is on the extracellular side. The chain crosses the membrane as a helical span at residues alanine 83–leucine 103. The Cytoplasmic segment spans residues proline 104–leucine 122. Residues alanine 123–valine 143 form a helical membrane-spanning segment. Over cysteine 144–serine 157 the chain is Extracellular. Residues leucine 158–cysteine 178 form a helical membrane-spanning segment. Residues alanine 179 to valine 207 are Cytoplasmic-facing. 4 positions are modified to phosphoserine: serine 193, serine 194, serine 197, and serine 198.

This sequence belongs to the claudin family. In terms of assembly, interacts with tetraspanin-3/TSPAN3. Interacts with OCLN.

The protein localises to the cell junction. It localises to the tight junction. It is found in the cell membrane. Functionally, plays a major role in tight junction-specific obliteration of the intercellular space, through calcium-independent cell-adhesion activity. This is Claudin-11 (CLDN11) from Bos taurus (Bovine).